We begin with the raw amino-acid sequence, 429 residues long: Saccharopine dehydrogenase-like oxidoreductase (429 aa).

Ala-2 carries the post-translational modification N-acetylalanine. A phosphoserine mark is found at Ser-209, Ser-215, and Ser-217.

The protein belongs to the saccharopine dehydrogenase family.

This is Saccharopine dehydrogenase-like oxidoreductase (Sccpdh) from Rattus norvegicus (Rat).